A 539-amino-acid chain; its full sequence is Glucose-6-phosphate isomerase (539 aa).

Catalysis depends on E340, which acts as the Proton donor. Catalysis depends on residues H371 and K500.

It belongs to the GPI family.

Its subcellular location is the cytoplasm. The enzyme catalyses alpha-D-glucose 6-phosphate = beta-D-fructose 6-phosphate. It participates in carbohydrate biosynthesis; gluconeogenesis. The protein operates within carbohydrate degradation; glycolysis; D-glyceraldehyde 3-phosphate and glycerone phosphate from D-glucose: step 2/4. Catalyzes the reversible isomerization of glucose-6-phosphate to fructose-6-phosphate. The chain is Glucose-6-phosphate isomerase from Ruegeria pomeroyi (strain ATCC 700808 / DSM 15171 / DSS-3) (Silicibacter pomeroyi).